We begin with the raw amino-acid sequence, 336 residues long: Glucokinase (336 aa).

12–17 (ADIGGT) is a binding site for ATP.

This sequence belongs to the bacterial glucokinase family.

The protein localises to the cytoplasm. It catalyses the reaction D-glucose + ATP = D-glucose 6-phosphate + ADP + H(+). This Helicobacter pylori (strain P12) protein is Glucokinase.